Reading from the N-terminus, the 217-residue chain is Glutathione S-transferase U20 (217 aa).

The GST N-terminal domain maps to 3-82 (NLPILLDYWP…YVDEAWPEKN (80 aa)). Glutathione-binding residues include Ser-13, Ile-54, and Ser-67. In terms of domain architecture, GST C-terminal spans 88–208 (DPYGRAQARF…LPDSEKIVAY (121 aa)).

This sequence belongs to the GST superfamily. Tau family. Homodimerization. Interacts with JAR1/FIN219 under continuous far red (cFR) light to stimulate JAR1/FIN219 activity and substrate selectivity. Mostly associated with vascular tissues, especially near hydathodes.

The protein localises to the nucleus. It localises to the cytoplasm. The protein resides in the cytosol. It catalyses the reaction RX + glutathione = an S-substituted glutathione + a halide anion + H(+). With respect to regulation, activated by JAR1/FIN219. Its function is as follows. Exhibits glutathione-dependent thiol transferase activities. Can use glutathione (GSH) and 1-chloro-2,4-dinitrobenzene (CDNB) as substrates. Involved in the regulation of far-red light influence on development. Regulator of the interplay between light and JA signaling by increasing JAR1/FIN219 efficiency. Maybe involved in gravitropic signal transduction. This is Glutathione S-transferase U20 from Arabidopsis thaliana (Mouse-ear cress).